The chain runs to 442 residues: 3-ketoacyl-CoA thiolase (442 aa).

Cysteine 105 functions as the Acyl-thioester intermediate in the catalytic mechanism. Catalysis depends on proton acceptor residues histidine 398 and cysteine 428.

It belongs to the thiolase-like superfamily. Thiolase family. As to quaternary structure, heterotetramer of two alpha chains (FadJ) and two beta chains (FadI).

The protein localises to the cytoplasm. The catalysed reaction is an acyl-CoA + acetyl-CoA = a 3-oxoacyl-CoA + CoA. The protein operates within lipid metabolism; fatty acid beta-oxidation. Catalyzes the final step of fatty acid oxidation in which acetyl-CoA is released and the CoA ester of a fatty acid two carbons shorter is formed. This Aliivibrio fischeri (strain ATCC 700601 / ES114) (Vibrio fischeri) protein is 3-ketoacyl-CoA thiolase.